A 221-amino-acid polypeptide reads, in one-letter code: MVKTWEEFLKQEAKQPYFIELMEAVKDARAKGNVYPSEEDMFSCFRLCPYNQVKVVILGQDPYHGPGQAHGLSFSVQKDVRIPPSLRNIYKELKTDLDIEPADHGYLAKWAEQGVLLMNTSWSVEEGKAGSHKKLGWATFTDHVLEELNNYDKPLVFILWGNHAIKAASGITNPQHLIIKGVHPSPLAASRGFFGSKPFSKTNAFLEEHERKPIDWDLNEQ.

Residue aspartate 61 is the Proton acceptor of the active site.

It belongs to the uracil-DNA glycosylase (UDG) superfamily. UNG family.

It localises to the cytoplasm. It catalyses the reaction Hydrolyzes single-stranded DNA or mismatched double-stranded DNA and polynucleotides, releasing free uracil.. In terms of biological role, excises uracil residues from the DNA which can arise as a result of misincorporation of dUMP residues by DNA polymerase or due to deamination of cytosine. This is Uracil-DNA glycosylase 1 from Listeria monocytogenes serovar 1/2a (strain ATCC BAA-679 / EGD-e).